The primary structure comprises 250 residues: 2,3-bisphosphoglycerate-dependent phosphoglycerate mutase (250 aa).

Residues 10-17 (RHGESQWN), 23-24 (TG), arginine 62, 89-92 (ERHY), lysine 100, 116-117 (RR), and 185-186 (GN) contribute to the substrate site. Histidine 11 (tele-phosphohistidine intermediate) is an active-site residue. The active-site Proton donor/acceptor is glutamate 89.

It belongs to the phosphoglycerate mutase family. BPG-dependent PGAM subfamily. Homodimer.

It carries out the reaction (2R)-2-phosphoglycerate = (2R)-3-phosphoglycerate. It participates in carbohydrate degradation; glycolysis; pyruvate from D-glyceraldehyde 3-phosphate: step 3/5. Catalyzes the interconversion of 2-phosphoglycerate and 3-phosphoglycerate. The sequence is that of 2,3-bisphosphoglycerate-dependent phosphoglycerate mutase from Citrobacter koseri (strain ATCC BAA-895 / CDC 4225-83 / SGSC4696).